A 138-amino-acid chain; its full sequence is Small ribosomal subunit protein uS11 (138 aa).

Low complexity predominate over residues 1–12; sequence MPPKKANAAGPK. The segment at 1-23 is disordered; the sequence is MPPKKANAAGPKKGQKTRKREKK. Residues 13–22 are compositionally biased toward basic residues; it reads KGQKTRKREK.

The protein belongs to the universal ribosomal protein uS11 family. Part of the 30S ribosomal subunit. Interacts with proteins S7 and S18. Binds to IF-3.

Functionally, located on the platform of the 30S subunit, it bridges several disparate RNA helices of the 16S rRNA. Forms part of the Shine-Dalgarno cleft in the 70S ribosome. In Mycobacterium leprae (strain Br4923), this protein is Small ribosomal subunit protein uS11.